The sequence spans 775 residues: MIARGTHREGRIPPFMTNNHSVFYDEEFGTHSVEATIDNGDFGSRTIRLETGQLARQANGSVVAYLDEDTMMLSTTTASSKPREGFDFFPLTVDVEERMYAAGRIPGSFFRREGRPGTDAILACRLIDRPLRPTFVKGLRNEVQVIVTVMSLDPKDMYDVVAINAASASTQLSGLPVSGPVGGVRMALIVDDDHEDGQWVAFPTREQHESALFEMVVAGRLTDEQVPEKPRKGRRRGRKSSPRKKTDNVAIMMVEAGATETVVERVNDGAPAPTESVVAEGIEAAKPFIAELCGAQQALRQAVDPETEEFPLFPPYGADVLAAVDSEAKGRISDIMSIADKQERDEALSSDMDDTVEALLEEFPEREAEIRAAHNAVTKEVVRSRILADGFRIDGRGVEDIRDLDVEVDLVPRAHGSSLFQRGETQILGVTTLDTLKMEQQVDSLGPVDHRRYIHHYNFPPYSTGETGRVGSPKRREIGHGALAERALKPMIPSRDDFPYTIRQVSEALGSNGSTSMGSVCASTLSLYNAGVPLKAPVAGIAMGLVSGEVKGKMTYVTLTDILGAEDAFGDMDFKVAGTEDFITALQLDTKLDGIPSDVLAGALKQAREARLEILNTMAEVIDEPDPMSDYAPRITTISVPVSKIGEVIGPKGKNINQITEDTGARVSIEDDGTVFISATSGGSAEAAVDRINEIANPQLPKVGERFLGTVVKTTAFGAFVSILPNRDGLVHISKLGGKKRIEKVEDVVNVGDKLEVEIADIDNRGKISLVPVDD.

A disordered region spans residues 223-247 (DEQVPEKPRKGRRRGRKSSPRKKTD). Residues 231-243 (RKGRRRGRKSSPR) are compositionally biased toward basic residues. Residues Asp-567 and Asp-573 each contribute to the Mg(2+) site. One can recognise a KH domain in the interval 633–692 (PRITTISVPVSKIGEVIGPKGKNINQITEDTGARVSIEDDGTVFISATSGGSAEAAVDRI). One can recognise an S1 motif domain in the interval 704-773 (GERFLGTVVK…NRGKISLVPV (70 aa)).

It belongs to the polyribonucleotide nucleotidyltransferase family. Mg(2+) serves as cofactor.

Its subcellular location is the cytoplasm. It catalyses the reaction RNA(n+1) + phosphate = RNA(n) + a ribonucleoside 5'-diphosphate. In terms of biological role, involved in mRNA degradation. Catalyzes the phosphorolysis of single-stranded polyribonucleotides processively in the 3'- to 5'-direction. The protein is Polyribonucleotide nucleotidyltransferase of Corynebacterium kroppenstedtii (strain DSM 44385 / JCM 11950 / CIP 105744 / CCUG 35717).